A 711-amino-acid chain; its full sequence is Ribosomal RNA large subunit methyltransferase K/L (711 aa).

Residues 43–154 form the THUMP domain; that stretch reads LAYRITLWTR…NGVITIAMNF (112 aa).

The protein belongs to the methyltransferase superfamily. RlmKL family.

The protein localises to the cytoplasm. The catalysed reaction is guanosine(2445) in 23S rRNA + S-adenosyl-L-methionine = N(2)-methylguanosine(2445) in 23S rRNA + S-adenosyl-L-homocysteine + H(+). It carries out the reaction guanosine(2069) in 23S rRNA + S-adenosyl-L-methionine = N(2)-methylguanosine(2069) in 23S rRNA + S-adenosyl-L-homocysteine + H(+). In terms of biological role, specifically methylates the guanine in position 2445 (m2G2445) and the guanine in position 2069 (m7G2069) of 23S rRNA. The protein is Ribosomal RNA large subunit methyltransferase K/L of Shewanella oneidensis (strain ATCC 700550 / JCM 31522 / CIP 106686 / LMG 19005 / NCIMB 14063 / MR-1).